Consider the following 233-residue polypeptide: 5'-methylthioadenosine/S-adenosylhomocysteine nucleosidase (233 aa).

Catalysis depends on glutamate 12, which acts as the Proton acceptor. Residues glycine 78, isoleucine 152, and 173 to 174 each bind substrate; that span reads ME. Aspartate 197 functions as the Proton donor in the catalytic mechanism.

Belongs to the PNP/UDP phosphorylase family. MtnN subfamily. In terms of assembly, homodimer.

The catalysed reaction is S-adenosyl-L-homocysteine + H2O = S-(5-deoxy-D-ribos-5-yl)-L-homocysteine + adenine. The enzyme catalyses S-methyl-5'-thioadenosine + H2O = 5-(methylsulfanyl)-D-ribose + adenine. It carries out the reaction 5'-deoxyadenosine + H2O = 5-deoxy-D-ribose + adenine. It functions in the pathway amino-acid biosynthesis; L-methionine biosynthesis via salvage pathway; S-methyl-5-thio-alpha-D-ribose 1-phosphate from S-methyl-5'-thioadenosine (hydrolase route): step 1/2. In terms of biological role, catalyzes the irreversible cleavage of the glycosidic bond in both 5'-methylthioadenosine (MTA) and S-adenosylhomocysteine (SAH/AdoHcy) to adenine and the corresponding thioribose, 5'-methylthioribose and S-ribosylhomocysteine, respectively. Also cleaves 5'-deoxyadenosine, a toxic by-product of radical S-adenosylmethionine (SAM) enzymes, into 5-deoxyribose and adenine. Thus, is required for in vivo function of the radical SAM enzymes biotin synthase and lipoic acid synthase, that are inhibited by 5'-deoxyadenosine accumulation. This chain is 5'-methylthioadenosine/S-adenosylhomocysteine nucleosidase, found in Yersinia pseudotuberculosis serotype O:1b (strain IP 31758).